The sequence spans 449 residues: Elongation factor 1-alpha (449 aa).

The region spanning 5–230 (KVHINIVVIG…DQINEPKRPS (226 aa)) is the tr-type G domain. The tract at residues 14–21 (GHVDSGKS) is G1. 14–21 (GHVDSGKS) is a binding site for GTP. The residue at position 55 (Lys55) is an N6,N6-dimethyllysine. Residues 70–74 (GITID) form a G2 region. Residue Lys79 is modified to N6,N6,N6-trimethyllysine. The segment at 91-94 (DAPG) is G3. GTP-binding positions include 91-95 (DAPGH) and 153-156 (NKMD). Residues 153–156 (NKMD) form a G4 region. Lys187 carries the N6,N6,N6-trimethyllysine modification. The tract at residues 194 to 196 (SGF) is G5. Lys261 is modified (N6-methyllysine). At Glu289 the chain carries 5-glutamyl glycerylphosphorylethanolamine. N6,N6,N6-trimethyllysine is present on Lys306. The residue at position 362 (Glu362) is a 5-glutamyl glycerylphosphorylethanolamine. Lys396 carries the N6,N6,N6-trimethyllysine modification.

It belongs to the TRAFAC class translation factor GTPase superfamily. Classic translation factor GTPase family. EF-Tu/EF-1A subfamily.

The protein localises to the cytoplasm. Functionally, this protein promotes the GTP-dependent binding of aminoacyl-tRNA to the A-site of ribosomes during protein biosynthesis. The chain is Elongation factor 1-alpha from Daucus carota (Wild carrot).